A 192-amino-acid chain; its full sequence is Acetolactate synthase small subunit (192 aa).

The ACT domain occupies 29–103 (IITVKVRNEM…DTLKVSDLTD (75 aa)).

It belongs to the acetolactate synthase small subunit family. In terms of assembly, dimer of large and small chains.

The catalysed reaction is 2 pyruvate + H(+) = (2S)-2-acetolactate + CO2. Its pathway is amino-acid biosynthesis; L-isoleucine biosynthesis; L-isoleucine from 2-oxobutanoate: step 1/4. It functions in the pathway amino-acid biosynthesis; L-valine biosynthesis; L-valine from pyruvate: step 1/4. The protein is Acetolactate synthase small subunit (ilvH) of Aquifex aeolicus (strain VF5).